The sequence spans 358 residues: Peptide chain release factor 1 (358 aa).

An N5-methylglutamine modification is found at Gln-233.

It belongs to the prokaryotic/mitochondrial release factor family. In terms of processing, methylated by PrmC. Methylation increases the termination efficiency of RF1.

Its subcellular location is the cytoplasm. Its function is as follows. Peptide chain release factor 1 directs the termination of translation in response to the peptide chain termination codons UAG and UAA. The polypeptide is Peptide chain release factor 1 (Listeria monocytogenes serotype 4b (strain CLIP80459)).